Consider the following 269-residue polypeptide: Probable molybdenum ABC transporter permease protein HVO_B0370 (269 aa).

The next 6 helical transmembrane spans lie at leucine 26–alanine 46, valine 69–tryptophan 89, valine 100–leucine 120, serine 140–alanine 160, isoleucine 198–methionine 218, and phenylalanine 243–leucine 263. The ABC transmembrane type-1 domain occupies alanine 65 to leucine 258.

Belongs to the binding-protein-dependent transport system permease family. The complex is composed of two ATP-binding proteins, two transmembrane proteins (HVO_B0370) and a solute-binding protein (HVO_B0369).

The protein resides in the cell membrane. Part of an ABC transporter complex involved in molybdenum import. Responsible for the translocation of the substrate across the membrane. In Haloferax volcanii (strain ATCC 29605 / DSM 3757 / JCM 8879 / NBRC 14742 / NCIMB 2012 / VKM B-1768 / DS2) (Halobacterium volcanii), this protein is Probable molybdenum ABC transporter permease protein HVO_B0370.